Reading from the N-terminus, the 287-residue chain is Isopentenyl-diphosphate Delta-isomerase I (287 aa).

The region spanning 105–257 (LLHRAFSVFL…GVKLSPWFRL (153 aa)) is the Nudix hydrolase domain. Active-site residues include Cys-142 and Tyr-207.

The protein belongs to the IPP isomerase type 1 family.

The enzyme catalyses isopentenyl diphosphate = dimethylallyl diphosphate. Its pathway is isoprenoid biosynthesis; dimethylallyl diphosphate biosynthesis; dimethylallyl diphosphate from isopentenyl diphosphate: step 1/1. The protein operates within porphyrin-containing compound metabolism; chlorophyll biosynthesis. Functionally, catalyzes the 1,3-allylic rearrangement of the homoallylic substrate isopentenyl (IPP) to its highly electrophilic allylic isomer, dimethylallyl diphosphate (DMAPP). The polypeptide is Isopentenyl-diphosphate Delta-isomerase I (IPI1) (Clarkia breweri (Fairy fans)).